A 92-amino-acid polypeptide reads, in one-letter code: Small ribosomal subunit protein uS19 (92 aa).

This sequence belongs to the universal ribosomal protein uS19 family.

Its function is as follows. Protein S19 forms a complex with S13 that binds strongly to the 16S ribosomal RNA. This is Small ribosomal subunit protein uS19 from Mycoplasmopsis synoviae (strain 53) (Mycoplasma synoviae).